The sequence spans 297 residues: Adrenocorticotropic hormone receptor (297 aa).

The Extracellular segment spans residues 1–23; it reads MKHITDLYESVNSTMSNKSDCPP. N-linked (GlcNAc...) asparagine glycans are attached at residues Asn-12 and Asn-17. Disulfide bonds link Cys-21/Cys-253 and Cys-245/Cys-251. A helical transmembrane segment spans residues 24–49; the sequence is VVLPEEVFFTISVIGVLENLIVLLAV. The Cytoplasmic segment spans residues 50 to 58; sequence IKNKNLQSP. Residues 59-79 form a helical membrane-spanning segment; the sequence is MYFFICSLAISDMLGSLYKIL. At 80–104 the chain is on the extracellular side; the sequence is ENILIIFRNMGYLEPRGGFESTADD. The chain crosses the membrane as a helical span at residues 105-126; sequence VVDSLFILSLLGSICSLSAIAA. At 127-147 the chain is on the cytoplasmic side; the sequence is DRYITIFHALQYQRLVTPRRA. Residues 148–168 form a helical membrane-spanning segment; the sequence is AVVLLIIWACCIGSGITIVTF. Topologically, residues 169-180 are extracellular; that stretch reads SHHVPAVIAFTA. Residues 181 to 199 form a helical membrane-spanning segment; sequence LFPLMLVFILCLYGHMFLL. The Cytoplasmic segment spans residues 200–217; the sequence is ARSHARRVSTLPRANMKG. A helical transmembrane segment spans residues 218–244; it reads AITLTVLLGVFIFCWAPFVLHILLMTF. Residues 245-256 lie on the Extracellular side of the membrane; the sequence is CPADPYCACYLA. A helical transmembrane segment spans residues 257-278; that stretch reads LFQVNAVLIMCNAIIDPFIYAF. Residues 279–297 lie on the Cytoplasmic side of the membrane; the sequence is RSPELRDAFKKMIICKRYP. A lipid anchor (S-palmitoyl cysteine) is attached at Cys-293.

The protein belongs to the G-protein coupled receptor 1 family. As to quaternary structure, homodimer. Interacts with corticotropin (ACTH). Interacts with MRAP; this interaction targets MC2R to the plasma membrane. Interacts with MRAP2; competing with MRAP for binding to MC2R and impairing the binding of corticotropin (ACTH). Post-translationally, ubiquitinated by MGRN1 that may be involved in post-endocytic trafficking and/or degradation of internalized receptor. As to expression, expressed in skin and adrenal gland tissues.

The protein resides in the cell membrane. Its function is as follows. Hormone receptor primarily expressed in adrenal cortex that plays a key role in regulating adrenocortical function. Upon corticotropin (ACTH) binding, facilitates the release of adrenal glucocorticoids, including cortisol and corticosterone. In addition, MC2R is required for fetal and neonatal adrenal gland development. Mechanistically, activates adenylate cyclase (cAMP), the MAPK cascade as well as the cAMP-dependent protein kinase A pathway leading to steroidogenic factor 1/NR5A1-mediated transcriptional activation. The chain is Adrenocorticotropic hormone receptor (MC2R) from Sus scrofa (Pig).